Reading from the N-terminus, the 102-residue chain is NADH-quinone oxidoreductase subunit K (102 aa).

The next 3 helical transmembrane spans lie at 6–26, 30–50, and 62–82; these read LEHG…GLMV, ILFV…AFIV, and VMFI…LAIL.

This sequence belongs to the complex I subunit 4L family. As to quaternary structure, NDH-1 is composed of 13 different subunits. Subunits NuoA, H, J, K, L, M, N constitute the membrane sector of the complex.

The protein localises to the cell inner membrane. It carries out the reaction a quinone + NADH + 5 H(+)(in) = a quinol + NAD(+) + 4 H(+)(out). NDH-1 shuttles electrons from NADH, via FMN and iron-sulfur (Fe-S) centers, to quinones in the respiratory chain. The immediate electron acceptor for the enzyme in this species is believed to be ubiquinone. Couples the redox reaction to proton translocation (for every two electrons transferred, four hydrogen ions are translocated across the cytoplasmic membrane), and thus conserves the redox energy in a proton gradient. The polypeptide is NADH-quinone oxidoreductase subunit K (Pseudomonas fluorescens (strain SBW25)).